The primary structure comprises 1560 residues: Lysine-specific demethylase 5C (1560 aa).

The JmjN domain maps to 14 to 55 (CPVFEPSWAEFRDPLGYIAKIRPIAEKSGICKIRPPADWQPP). The ARID domain maps to 79–169 (TRVKLNYLDQ…IVYPYEMYQS (91 aa)). Polar residues predominate over residues 197–207 (LRQSVQPSKFN). Positions 197–227 (LRQSVQPSKFNSYGRRAKRLQPDPEPTEEDI) are disordered. Glycyl lysine isopeptide (Lys-Gly) (interchain with G-Cter in SUMO2) cross-links involve residues Lys205, Lys229, Lys244, and Lys274. Ser287 bears the Phosphoserine mark. Residue Lys295 forms a Glycyl lysine isopeptide (Lys-Gly) (interchain with G-Cter in SUMO2) linkage. Phosphoserine occurs at positions 301 and 317. A PHD-type 1 zinc finger spans residues 326–372 (VCRMCSRGDEDDKLLLCDGCDDNYHIFCLLPPLPEIPKGVWRCPKCV). Position 440 (Tyr440) interacts with 2-oxoglutarate. A JmjC domain is found at 468–634 (EYATSGWNLN…AGRQCIEHYR (167 aa)). 2 residues coordinate Fe cation: His514 and Glu516. 2-oxoglutarate-binding residues include Ser522, Asn524, and Lys532. His602 lines the Fe cation pocket. A C5HC2 zinc finger spans residues 707–759 (CIKCKTTCFLSALACYDCPDGLVCLSHINDLCKCSSSRQYLRYRYTLDELPAM). A phosphoserine mark is found at Ser893 and Ser897. Lys1127 is covalently cross-linked (Glycyl lysine isopeptide (Lys-Gly) (interchain with G-Cter in SUMO2)). Residues 1161–1181 (ILQLRRTNSAKPSPLASSSTA) are disordered. The span at 1169–1181 (SAKPSPLASSSTA) shows a compositional bias: low complexity. The segment at 1187-1248 (ICVCGQVLAG…DTKFLCPLCM (62 aa)) adopts a PHD-type 2 zinc-finger fold. Disordered stretches follow at residues 1316–1371 (QAEP…GSGK) and 1444–1560 (ERHG…QQQL). Positions 1335–1345 (PLREGSGKDMP) are enriched in basic and acidic residues. Ser1359 is subject to Phosphoserine. Residues 1448 to 1463 (SRARGRALERRRRRKV) show a composition bias toward basic residues. Residues 1464-1481 (DRGGEGDDPAREELEPKR) show a composition bias toward basic and acidic residues. Residues 1488–1503 (EAEEVQEEEELEEETG) show a composition bias toward acidic residues. Residues 1516–1544 (SPSTQENQNGLEPAEGTTSGPSAPFSTLT) show a composition bias toward polar residues.

It belongs to the JARID1 histone demethylase family. Part of two distinct complexes, one containing E2F6, and the other containing REST. Interacts with ZMYND8. It depends on Fe(2+) as a cofactor. As to expression, expressed in all tissues examined. Highest levels found in brain and skeletal muscle.

It is found in the nucleus. The catalysed reaction is N(6),N(6),N(6)-trimethyl-L-lysyl(4)-[histone H3] + 3 2-oxoglutarate + 3 O2 = L-lysyl(4)-[histone H3] + 3 formaldehyde + 3 succinate + 3 CO2. The inhibitor KDOAM-25 and others inhibit its demethylase activity, resulting to cell cycle arrest in myeloma cells. Functionally, histone demethylase that specifically demethylates 'Lys-4' of histone H3, thereby playing a central role in histone code. Does not demethylate histone H3 'Lys-9', H3 'Lys-27', H3 'Lys-36', H3 'Lys-79' or H4 'Lys-20'. Demethylates trimethylated and dimethylated but not monomethylated H3 'Lys-4'. Participates in transcriptional repression of neuronal genes by recruiting histone deacetylases and REST at neuron-restrictive silencer elements. Represses the CLOCK-BMAL1 heterodimer-mediated transcriptional activation of the core clock component PER2. The chain is Lysine-specific demethylase 5C from Homo sapiens (Human).